Here is a 214-residue protein sequence, read N- to C-terminus: Cell division protein SepF (214 aa).

The segment at 25-51 (EDDDRGARAGGYSRRPREDRFEEEAYG) is disordered.

It belongs to the SepF family. Homodimer. Interacts with FtsZ.

It is found in the cytoplasm. In terms of biological role, cell division protein that is part of the divisome complex and is recruited early to the Z-ring. Probably stimulates Z-ring formation, perhaps through the cross-linking of FtsZ protofilaments. Its function overlaps with FtsA. The sequence is that of Cell division protein SepF from Mycolicibacterium smegmatis (strain ATCC 700084 / mc(2)155) (Mycobacterium smegmatis).